Consider the following 398-residue polypeptide: Carbamoyl phosphate synthase small chain (398 aa).

Residues 1-199 are CPSase; that stretch reads MTPAWATEKP…WNEGFGEQAE (199 aa). Residues S54, G251, and G253 each contribute to the L-glutamine site. The region spanning 203-391 is the Glutamine amidotransferase type-1 domain; it reads HVVAIDYGVK…VNLIREKRGE (189 aa). Catalysis depends on C280, which acts as the Nucleophile. L281, Q284, N322, G324, and F325 together coordinate L-glutamine. Catalysis depends on residues H364 and E366.

It belongs to the CarA family. In terms of assembly, composed of two chains; the small (or glutamine) chain promotes the hydrolysis of glutamine to ammonia, which is used by the large (or ammonia) chain to synthesize carbamoyl phosphate. Tetramer of heterodimers (alpha,beta)4.

The enzyme catalyses hydrogencarbonate + L-glutamine + 2 ATP + H2O = carbamoyl phosphate + L-glutamate + 2 ADP + phosphate + 2 H(+). The catalysed reaction is L-glutamine + H2O = L-glutamate + NH4(+). Its pathway is amino-acid biosynthesis; L-arginine biosynthesis; carbamoyl phosphate from bicarbonate: step 1/1. It functions in the pathway pyrimidine metabolism; UMP biosynthesis via de novo pathway; (S)-dihydroorotate from bicarbonate: step 1/3. Functionally, small subunit of the glutamine-dependent carbamoyl phosphate synthetase (CPSase). CPSase catalyzes the formation of carbamoyl phosphate from the ammonia moiety of glutamine, carbonate, and phosphate donated by ATP, constituting the first step of 2 biosynthetic pathways, one leading to arginine and/or urea and the other to pyrimidine nucleotides. The small subunit (glutamine amidotransferase) binds and cleaves glutamine to supply the large subunit with the substrate ammonia. The protein is Carbamoyl phosphate synthase small chain of Mesorhizobium japonicum (strain LMG 29417 / CECT 9101 / MAFF 303099) (Mesorhizobium loti (strain MAFF 303099)).